The primary structure comprises 146 residues: Small ribosomal subunit protein bS16 (146 aa).

The segment at 119–146 (GSENKGGKSKKAEEKSAEKTAEKSEGEA) is disordered. A compositionally biased stretch (basic and acidic residues) spans 128–146 (KKAEEKSAEKTAEKSEGEA).

It belongs to the bacterial ribosomal protein bS16 family.

The protein is Small ribosomal subunit protein bS16 of Thermobifida fusca (strain YX).